A 284-amino-acid polypeptide reads, in one-letter code: RNase adapter protein RapZ (284 aa).

8-15 (GRSGSGKS) contacts ATP. 56–59 (DVRN) contributes to the GTP binding site. An RNA-binding region spans residues 266–284 (RSRGKNVQSRHRTLEKRKQ).

It belongs to the RapZ-like family. RapZ subfamily. As to quaternary structure, homotrimer.

Functionally, modulates the synthesis of GlmS, by affecting the processing and stability of the regulatory small RNA GlmZ. When glucosamine-6-phosphate (GlcN6P) concentrations are high in the cell, RapZ binds GlmZ and targets it to cleavage by RNase E. Consequently, GlmZ is inactivated and unable to activate GlmS synthesis. Under low GlcN6P concentrations, RapZ is sequestered and inactivated by an other regulatory small RNA, GlmY, preventing GlmZ degradation and leading to synthesis of GlmS. This is RNase adapter protein RapZ from Serratia proteamaculans (strain 568).